Reading from the N-terminus, the 185-residue chain is Elongation factor P (185 aa).

Belongs to the elongation factor P family.

Its subcellular location is the cytoplasm. The protein operates within protein biosynthesis; polypeptide chain elongation. In terms of biological role, involved in peptide bond synthesis. Stimulates efficient translation and peptide-bond synthesis on native or reconstituted 70S ribosomes in vitro. Probably functions indirectly by altering the affinity of the ribosome for aminoacyl-tRNA, thus increasing their reactivity as acceptors for peptidyl transferase. The protein is Elongation factor P of Deinococcus geothermalis (strain DSM 11300 / CIP 105573 / AG-3a).